The primary structure comprises 319 residues: Bidirectional sugar transporter SWEET15 (319 aa).

At 1–10 the chain is on the extracellular side; that stretch reads MAFMSMERST. Residues 11–31 traverse the membrane as a helical segment; sequence WAFTFGILGNLISLMVFLSPL. Residues 13 to 99 form the MtN3/slv 1 domain; the sequence is FTFGILGNLI…AMYLAYAPKS (87 aa). The Cytoplasmic portion of the chain corresponds to 32 to 50; sequence PTFYRVYRKKSTEGFQSTP. The chain crosses the membrane as a helical span at residues 51–71; the sequence is YVVTLFSCMLWMYYAFVKSGA. Glu72 is a topological domain (extracellular). The chain crosses the membrane as a helical span at residues 73-93; that stretch reads LLVTINGVGCVIETVYLAMYL. Residues 94–106 lie on the Cytoplasmic side of the membrane; it reads AYAPKSARMLTAK. A helical membrane pass occupies residues 107–127; it reads MLLGLNIGLFGVIALVTLLLS. At 128 to 134 the chain is on the extracellular side; that stretch reads RGELRVH. A helical membrane pass occupies residues 135 to 155; that stretch reads VLGWICVAVSLSVFAAPLSII. One can recognise a MtN3/slv 2 domain in the interval 135–219; the sequence is VLGWICVAVS…ALYMAYRSKK (85 aa). The Cytoplasmic portion of the chain corresponds to 156-167; sequence RLVIRTKSVEFM. Residues 168 to 188 form a helical membrane-spanning segment; the sequence is PFSLSFFLVLSAVIWFLYGLL. The Extracellular portion of the chain corresponds to 189-191; sequence KKD. Residues 192–212 traverse the membrane as a helical segment; that stretch reads VFVALPNVLGFVFGVAQMALY. At 213 to 319 the chain is on the cytoplasmic side; it reads MAYRSKKPLV…KPDMAIVVEV (107 aa).

This sequence belongs to the SWEET sugar transporter family. Forms homooligomers and/or heterooligomers.

The protein localises to the cell membrane. Mediates both low-affinity uptake and efflux of sugar across the plasma membrane. In terms of biological role, confers blight susceptibility. Confers TAL effector-mediated susceptibility to Xanthomonas oryzae pv. oryzae. The sequence is that of Bidirectional sugar transporter SWEET15 (SWEET15) from Oryza sativa subsp. japonica (Rice).